A 177-amino-acid chain; its full sequence is Large ribosomal subunit protein uL6 (177 aa).

The protein belongs to the universal ribosomal protein uL6 family. Part of the 50S ribosomal subunit.

In terms of biological role, this protein binds to the 23S rRNA, and is important in its secondary structure. It is located near the subunit interface in the base of the L7/L12 stalk, and near the tRNA binding site of the peptidyltransferase center. This chain is Large ribosomal subunit protein uL6, found in Latilactobacillus sakei subsp. sakei (strain 23K) (Lactobacillus sakei subsp. sakei).